The following is a 376-amino-acid chain: Fibromodulin (376 aa).

The signal sequence occupies residues 1 to 18 (MQWASILLLRGLCSLSQG). The residue at position 19 (Gln19) is a Pyrrolidone carboxylic acid. Sulfotyrosine is present on residues Tyr20, Tyr38, Tyr53, Tyr55, Tyr63, and Tyr65. The 39-residue stretch at 67-105 (APPPPEPRDCPQECDCPPNFPTAMYCDNRNLKYLPFVPS) folds into the LRRNT domain. LRR repeat units lie at residues 106–127 (RMKY…VFDN), 130–143 (GLLW…QITS), 156–176 (HLER…PLPR), 177–198 (SLRE…ALEG), 201–222 (NLTA…MRGL), 224–245 (SLIL…LPSA), 246–266 (LEQL…YFRG), and 269–289 (KLLY…ATNT). N-linked (GlcNAc...) (keratan sulfate) asparagine glycosylation occurs at Asn127. N-linked (GlcNAc...) (keratan sulfate) asparagine glycosylation is present at Asn166. N-linked (GlcNAc...) (keratan sulfate) asparagine glycosylation occurs at Asn201. Residue Asn291 is glycosylated (N-linked (GlcNAc...) (keratan sulfate) asparagine). 2 LRR repeats span residues 294 to 315 (SLLE…NTNL) and 316 to 335 (ENLY…SFCT). A disulfide bridge connects residues Cys334 and Cys367. N-linked (GlcNAc...) asparagine glycosylation is present at Asn341. The stretch at 344–367 (KLQVLRLDGNEIKRSAMPVDAPLC) is one LRR 11 repeat.

It belongs to the small leucine-rich proteoglycan (SLRP) family. SLRP class II subfamily. As to quaternary structure, binds to type I and type II collagen. Post-translationally, binds keratan sulfate chains.

The protein localises to the secreted. The protein resides in the extracellular space. It is found in the extracellular matrix. Its function is as follows. Affects the rate of fibrils formation. May have a primary role in collagen fibrillogenesis. This chain is Fibromodulin (Fmod), found in Rattus norvegicus (Rat).